Consider the following 220-residue polypeptide: Protein US2 homolog (220 aa).

The protein belongs to the herpesviridae US2 family.

This is Protein US2 homolog from Bovine herpesvirus 1.2 (strain ST) (BoHV-1).